The sequence spans 204 residues: Putative AgrB-like protein (204 aa).

Helical transmembrane passes span 52-74 (YGIA…YLWL), 87-107 (LNCT…FQNI), 111-131 (NWIV…FAPA), and 156-176 (LILT…LIMV).

This sequence belongs to the AgrB family.

The protein resides in the cell membrane. Functionally, may be involved in the proteolytic processing of a quorum sensing system signal molecule precursor. The sequence is that of Putative AgrB-like protein from Listeria monocytogenes serotype 4b (strain CLIP80459).